Reading from the N-terminus, the 60-residue chain is Large ribosomal subunit protein bL32 (60 aa).

It belongs to the bacterial ribosomal protein bL32 family.

This chain is Large ribosomal subunit protein bL32, found in Desulfovibrio desulfuricans (strain ATCC 27774 / DSM 6949 / MB).